The primary structure comprises 257 residues: Nickel import system ATP-binding protein NikD (257 aa).

An ABC transporter domain is found at 4 to 245; sequence IDIQNLTIKN…HLHPYTERLI (242 aa). 37–44 is a binding site for ATP; it reads GESGAGKS.

This sequence belongs to the ABC transporter superfamily. As to quaternary structure, the complex is composed of two ATP-binding proteins (NikD and NikE), two transmembrane proteins (NikB and NikC) and a solute-binding protein (NikA).

Its subcellular location is the cell membrane. It carries out the reaction Ni(2+)(out) + ATP + H2O = Ni(2+)(in) + ADP + phosphate + H(+). In terms of biological role, part of the ABC transporter complex NikABCDE (Opp2) involved in nickel import. Probably responsible for energy coupling to the transport system. The polypeptide is Nickel import system ATP-binding protein NikD (Staphylococcus aureus (strain MW2)).